A 428-amino-acid polypeptide reads, in one-letter code: Dihydrolipoyllysine-residue acetyltransferase component of pyruvate dehydrogenase complex (428 aa).

Positions 2 to 77 (AFEFKLPDIG…TVGQTLITLD (76 aa)) constitute a Lipoyl-binding domain. Lys-43 is subject to N6-lipoyllysine. The disordered stretch occupies residues 88–123 (GQEQEEAKKEEKTETVSKEEKVDAVAPNAPAAEAEA). Residues 89–110 (QEQEEAKKEEKTETVSKEEKVD) show a composition bias toward basic and acidic residues. A compositionally biased stretch (low complexity) spans 111–123 (AVAPNAPAAEAEA). Residues 130–167 (IAMPSVRKYAREKGVDIRLVQGTGKNGRVLKEDIDAFL) enclose the Peripheral subunit-binding (PSBD) domain. The segment covering 177–194 (AAEEKAAPAAAKPATTEG) has biased composition (low complexity). A disordered region spans residues 177–201 (AAEEKAAPAAAKPATTEGEFPETRE). Residue His-399 is part of the active site.

It belongs to the 2-oxoacid dehydrogenase family. In terms of assembly, forms a 60-polypeptide structural core with icosahedral symmetry. (R)-lipoate is required as a cofactor.

The catalysed reaction is N(6)-[(R)-dihydrolipoyl]-L-lysyl-[protein] + acetyl-CoA = N(6)-[(R)-S(8)-acetyldihydrolipoyl]-L-lysyl-[protein] + CoA. Its function is as follows. The pyruvate dehydrogenase complex catalyzes the overall conversion of pyruvate to acetyl-CoA and CO(2). It contains multiple copies of three enzymatic components: pyruvate dehydrogenase (E1), dihydrolipoamide acetyltransferase (E2) and lipoamide dehydrogenase (E3). This is Dihydrolipoyllysine-residue acetyltransferase component of pyruvate dehydrogenase complex (pdhC) from Geobacillus stearothermophilus (Bacillus stearothermophilus).